The primary structure comprises 187 residues: Hypoxanthine/guanine phosphoribosyltransferase (187 aa).

This sequence belongs to the purine/pyrimidine phosphoribosyltransferase family. Archaeal HPRT subfamily. Homodimer.

The protein resides in the cytoplasm. The enzyme catalyses IMP + diphosphate = hypoxanthine + 5-phospho-alpha-D-ribose 1-diphosphate. It catalyses the reaction GMP + diphosphate = guanine + 5-phospho-alpha-D-ribose 1-diphosphate. Its pathway is purine metabolism; IMP biosynthesis via salvage pathway; IMP from hypoxanthine: step 1/1. In terms of biological role, catalyzes a salvage reaction resulting in the formation of IMP that is energically less costly than de novo synthesis. The sequence is that of Hypoxanthine/guanine phosphoribosyltransferase from Methanocorpusculum labreanum (strain ATCC 43576 / DSM 4855 / Z).